Reading from the N-terminus, the 461-residue chain is Cysteine--tRNA ligase (461 aa).

Cysteine 28 is a Zn(2+) binding site. A 'HIGH' region motif is present at residues 30–40 (ITVYDLCHIGH). Zn(2+)-binding residues include cysteine 209, histidine 234, and glutamate 238. Residues 266–270 (KMSKS) carry the 'KMSKS' region motif. Lysine 269 provides a ligand contact to ATP.

The protein belongs to the class-I aminoacyl-tRNA synthetase family. As to quaternary structure, monomer. Requires Zn(2+) as cofactor.

Its subcellular location is the cytoplasm. It carries out the reaction tRNA(Cys) + L-cysteine + ATP = L-cysteinyl-tRNA(Cys) + AMP + diphosphate. The protein is Cysteine--tRNA ligase of Shigella flexneri.